A 548-amino-acid chain; its full sequence is Chaperonin GroEL (548 aa).

ATP contacts are provided by residues T30–P33, K51, D87–T91, G415, and D496.

Belongs to the chaperonin (HSP60) family. In terms of assembly, forms a cylinder of 14 subunits composed of two heptameric rings stacked back-to-back. Interacts with the co-chaperonin GroES.

The protein localises to the cytoplasm. The enzyme catalyses ATP + H2O + a folded polypeptide = ADP + phosphate + an unfolded polypeptide.. Its function is as follows. Together with its co-chaperonin GroES, plays an essential role in assisting protein folding. The GroEL-GroES system forms a nano-cage that allows encapsulation of the non-native substrate proteins and provides a physical environment optimized to promote and accelerate protein folding. In Haemophilus influenzae (strain PittGG), this protein is Chaperonin GroEL.